The chain runs to 374 residues: U-box domain-containing protein 8 (374 aa).

The U-box domain occupies 4-79; that stretch reads DLPNDFRCPI…LNFAHVSLKE (76 aa). 5 ARM repeats span residues 126–165, 167–206, 208–248, 250–288, and 289–327; these read SSIR…NLSL, DDNK…SLAV, EVNK…ALCS, PDNR…KCRG, and GREE…CLCC.

As to expression, expressed in the whole plant.

The enzyme catalyses S-ubiquitinyl-[E2 ubiquitin-conjugating enzyme]-L-cysteine + [acceptor protein]-L-lysine = [E2 ubiquitin-conjugating enzyme]-L-cysteine + N(6)-ubiquitinyl-[acceptor protein]-L-lysine.. Its pathway is protein modification; protein ubiquitination. Functions as an E3 ubiquitin ligase. Involved in the age-dependent pseudo-self-compatibility process. The sequence is that of U-box domain-containing protein 8 (PUB8) from Arabidopsis thaliana (Mouse-ear cress).